The following is a 367-amino-acid chain: Popeye domain-containing protein 2 (367 aa).

A glycan (N-linked (GlcNAc...) asparagine) is linked at asparagine 4. 2 consecutive transmembrane segments (helical) span residues 36-56 (FLLM…LFGI) and 77-97 (IVLW…QLVY). Disordered regions lie at residues 273–292 (PSAS…ALEA) and 312–367 (APPA…TPEL). Residues 278-290 (GEPESEKDDEEAL) show a composition bias toward acidic residues. Residues 344-356 (PLQNSSQVMSRSQ) are compositionally biased toward polar residues. Residue asparagine 347 is glycosylated (N-linked (GlcNAc...) asparagine). Position 364 is a phosphothreonine (threonine 364).

The protein belongs to the popeye family. Expressed in the developing and adult heart, with high expression levels in the sinus and atrioventricular nodes. Also expressed in the bladder and skeletal muscle.

The protein resides in the membrane. The protein localises to the cell membrane. It is found in the sarcolemma. Important for the maintenance of cardiac function. Plays a regulatory function in heart rate dynamics mediated, at least in part, through cAMP-binding and, probably, by increasing cell surface expression of the potassium channel KCNK2 and enhancing current density. This chain is Popeye domain-containing protein 2 (Popdc2), found in Mus musculus (Mouse).